The sequence spans 247 residues: ATP synthase subunit a, chloroplastic (247 aa).

Transmembrane regions (helical) follow at residues 38 to 58, 95 to 115, 134 to 154, 199 to 219, and 220 to 240; these read QVLI…IIAV, VPFI…GALL, INTT…AGLT, LVVV…VMFL, and GLFT…AYIG.

This sequence belongs to the ATPase A chain family. In terms of assembly, F-type ATPases have 2 components, CF(1) - the catalytic core - and CF(0) - the membrane proton channel. CF(1) has five subunits: alpha(3), beta(3), gamma(1), delta(1), epsilon(1). CF(0) has four main subunits: a, b, b' and c.

Its subcellular location is the plastid. It localises to the chloroplast thylakoid membrane. Functionally, key component of the proton channel; it plays a direct role in the translocation of protons across the membrane. The sequence is that of ATP synthase subunit a, chloroplastic from Carica papaya (Papaya).